Here is a 58-residue protein sequence, read N- to C-terminus: Large ribosomal subunit protein uL30 (58 aa).

The protein belongs to the universal ribosomal protein uL30 family. As to quaternary structure, part of the 50S ribosomal subunit.

This is Large ribosomal subunit protein uL30 from Acinetobacter baylyi (strain ATCC 33305 / BD413 / ADP1).